A 135-amino-acid polypeptide reads, in one-letter code: ATP synthase epsilon chain (135 aa).

Belongs to the ATPase epsilon chain family. In terms of assembly, F-type ATPases have 2 components, CF(1) - the catalytic core - and CF(0) - the membrane proton channel. CF(1) has five subunits: alpha(3), beta(3), gamma(1), delta(1), epsilon(1). CF(0) has three main subunits: a, b and c.

It is found in the cell inner membrane. In terms of biological role, produces ATP from ADP in the presence of a proton gradient across the membrane. In Rhodopseudomonas palustris (strain BisA53), this protein is ATP synthase epsilon chain.